The chain runs to 349 residues: Isopentenyl-diphosphate delta-isomerase (349 aa).

Substrate is bound at residue 6–7; that stretch reads RK. Residues 62 to 64, Ser-93, and Asn-122 each bind FMN; that span reads AMT. Gln-152 is a substrate binding site. A Mg(2+)-binding site is contributed by Glu-153. Residues Lys-184, Thr-214, 258–259, and 280–281 contribute to the FMN site; these read GG and AG.

Belongs to the IPP isomerase type 2 family. Homooctamer. Dimer of tetramers. FMN serves as cofactor. It depends on NADPH as a cofactor. Requires Mg(2+) as cofactor.

The protein resides in the cytoplasm. The enzyme catalyses isopentenyl diphosphate = dimethylallyl diphosphate. In terms of biological role, involved in the biosynthesis of isoprenoids. Catalyzes the 1,3-allylic rearrangement of the homoallylic substrate isopentenyl (IPP) to its allylic isomer, dimethylallyl diphosphate (DMAPP). This Bacillus mycoides (strain KBAB4) (Bacillus weihenstephanensis) protein is Isopentenyl-diphosphate delta-isomerase.